The following is a 225-amino-acid chain: MQIKWFGHSAFMVEAASLKLLIDPWVSNPLSPASPQEVAAAKPTHILITHDHFDHLGESVDIAKATGAPVVGTYELTLEVAEKGIPEAQTMPMNIGGTIKLGDGVEVYMTPALHTANRGAPSGFVIATPEGTVYHAGDTALFRDMELIGELYDIDVALLPIGSVFTMGPREAAIAVQLLRPRRVVPMHYNTFPLIRQDPEDFKARVEAVTRAKVYVMKPGDVLKL.

Belongs to the UPF0173 family.

This Pyrobaculum calidifontis (strain DSM 21063 / JCM 11548 / VA1) protein is UPF0173 metal-dependent hydrolase Pcal_1074.